The chain runs to 101 residues: Protein S100-A4 (101 aa).

The residue at position 2 (Ala-2) is an N-acetylalanine. EF-hand domains are found at residues 12–47 (IVST…SFLG) and 50–85 (TDEA…IAMM). Residues Lys-28 and Glu-33 each contribute to the Ca(2+) site. The residue at position 35 (Lys-35) is an N6-acetyllysine. Ca(2+)-binding residues include Asp-63, Asn-65, Asp-67, Glu-69, and Glu-74.

Belongs to the S-100 family. As to quaternary structure, homodimer. Interacts with PPFIBP1 in a calcium-dependent mode. Interacts with PGLYRP1; this complex acts as a chemoattractant that promotes lymphocyte movement. Interacts with MYH9; this interaction increases cell motility. Interacts with Annexin 2/ANXA2. Interacts with TP53; this interaction promotes TP53 degradation. Interacts with CCR5 and CXCR3. Interacts with FCGR3A; this interaction inhibits PKC-dependent phosphorylation of FCGR3A. Specifically expressed in different metastatic cells.

It is found in the secreted. Its subcellular location is the nucleus. The protein resides in the cytoplasm. Its function is as follows. Calcium-binding protein that plays a role in various cellular processes including motility, angiogenesis, cell differentiation, apoptosis, and autophagy. Increases cell motility and invasiveness by interacting with non-muscle myosin heavy chain (NMMHC) IIA/MYH9. Mechanistically, promotes filament depolymerization and increases the amount of soluble myosin-IIA, resulting in the formation of stable protrusions facilitating chemotaxis. Also modulates the pro-apoptotic function of TP53 by binding to its C-terminal transactivation domain within the nucleus and reducing its protein levels. Within the extracellular space, stimulates cytokine production including granulocyte colony-stimulating factor and CCL24 from T-lymphocytes. In addition, stimulates T-lymphocyte chemotaxis by acting as a chemoattractant complex with PGLYRP1 that promotes lymphocyte migration via CCR5 and CXCR3 receptors. The protein is Protein S100-A4 (S100a4) of Mus musculus (Mouse).